The following is a 416-amino-acid chain: Histidine--tRNA ligase (416 aa).

This sequence belongs to the class-II aminoacyl-tRNA synthetase family. In terms of assembly, homodimer.

Its subcellular location is the cytoplasm. The catalysed reaction is tRNA(His) + L-histidine + ATP = L-histidyl-tRNA(His) + AMP + diphosphate + H(+). The polypeptide is Histidine--tRNA ligase (Dictyoglomus thermophilum (strain ATCC 35947 / DSM 3960 / H-6-12)).